Consider the following 465-residue polypeptide: Cysteine--tRNA ligase (465 aa).

A Zn(2+)-binding site is contributed by Cys-28. The 'HIGH' region signature appears at Met-30 to His-40. The Zn(2+) site is built by Cys-209, His-234, and Glu-238. A 'KMSKS' region motif is present at residues Lys-266–Ser-270. Lys-269 provides a ligand contact to ATP.

This sequence belongs to the class-I aminoacyl-tRNA synthetase family. In terms of assembly, monomer. Zn(2+) is required as a cofactor.

It localises to the cytoplasm. It carries out the reaction tRNA(Cys) + L-cysteine + ATP = L-cysteinyl-tRNA(Cys) + AMP + diphosphate. The sequence is that of Cysteine--tRNA ligase from Methylococcus capsulatus (strain ATCC 33009 / NCIMB 11132 / Bath).